Reading from the N-terminus, the 430-residue chain is UPF0597 protein Clos_2050 (430 aa).

It belongs to the UPF0597 family.

This Alkaliphilus oremlandii (strain OhILAs) (Clostridium oremlandii (strain OhILAs)) protein is UPF0597 protein Clos_2050.